A 237-amino-acid polypeptide reads, in one-letter code: Phosphoserine phosphatase (237 aa).

Catalysis depends on D39, which acts as the Nucleophile. The Mg(2+) site is built by D39 and E41. Residue E41 is the Proton donor of the active site. Residues E47, R78, 122-123, and K165 each bind substrate; that span reads SD. D184 contacts Mg(2+). Position 187 (N187) interacts with substrate.

It belongs to the thrH family. Mg(2+) serves as cofactor.

It catalyses the reaction O-phospho-L-serine + H2O = L-serine + phosphate. The enzyme catalyses O-phospho-D-serine + H2O = D-serine + phosphate. It participates in amino-acid biosynthesis; L-serine biosynthesis; L-serine from 3-phospho-D-glycerate: step 3/3. In terms of biological role, phosphoserine phosphatase that mediates dephosphorylation of phosphoserine in the serine biosynthesis pathway. Also able to dephosphorylate phospho-threonine. This Pseudomonas syringae pv. tomato (strain ATCC BAA-871 / DC3000) protein is Phosphoserine phosphatase.